The following is a 78-amino-acid chain: Translational regulator CsrA (78 aa).

It belongs to the CsrA/RsmA family. Homodimer; the beta-strands of each monomer intercalate to form a hydrophobic core, while the alpha-helices form wings that extend away from the core.

The protein localises to the cytoplasm. In terms of biological role, a translational regulator that binds mRNA to regulate translation initiation and/or mRNA stability. Usually binds in the 5'-UTR at or near the Shine-Dalgarno sequence preventing ribosome-binding, thus repressing translation. Its main target seems to be the major flagellin gene, while its function is anatagonized by FliW. This chain is Translational regulator CsrA, found in Geobacter metallireducens (strain ATCC 53774 / DSM 7210 / GS-15).